Reading from the N-terminus, the 146-residue chain is Putative nickel-responsive regulator 1 (146 aa).

Ni(2+) is bound by residues His81, His92, Tyr94, and Cys100.

It belongs to the transcriptional regulatory CopG/NikR family. Requires Ni(2+) as cofactor.

Functionally, transcriptional regulator. This chain is Putative nickel-responsive regulator 1, found in Methanosarcina mazei (strain ATCC BAA-159 / DSM 3647 / Goe1 / Go1 / JCM 11833 / OCM 88) (Methanosarcina frisia).